Here is a 149-residue protein sequence, read N- to C-terminus: Large ribosomal subunit protein bL9 (149 aa).

This sequence belongs to the bacterial ribosomal protein bL9 family.

Functionally, binds to the 23S rRNA. The polypeptide is Large ribosomal subunit protein bL9 (Histophilus somni (strain 129Pt) (Haemophilus somnus)).